A 341-amino-acid polypeptide reads, in one-letter code: Methionine import ATP-binding protein MetN 3 (341 aa).

The ABC transporter domain maps to 2 to 241; the sequence is ILLENVKKIY…PQQDITKRFV (240 aa). 38-45 provides a ligand contact to ATP; that stretch reads GYSGAGKS.

It belongs to the ABC transporter superfamily. Methionine importer (TC 3.A.1.24) family. In terms of assembly, the complex is composed of two ATP-binding proteins (MetN), two transmembrane proteins (MetI) and a solute-binding protein (MetQ).

It is found in the cell membrane. It carries out the reaction L-methionine(out) + ATP + H2O = L-methionine(in) + ADP + phosphate + H(+). The enzyme catalyses D-methionine(out) + ATP + H2O = D-methionine(in) + ADP + phosphate + H(+). Its function is as follows. Part of the ABC transporter complex MetNIQ involved in methionine import. Responsible for energy coupling to the transport system. This is Methionine import ATP-binding protein MetN 3 from Bacillus anthracis.